The chain runs to 484 residues: Probable glycine dehydrogenase (decarboxylating) subunit 2 (484 aa).

Lys-264 is subject to N6-(pyridoxal phosphate)lysine.

The protein belongs to the GcvP family. C-terminal subunit subfamily. As to quaternary structure, the glycine cleavage system is composed of four proteins: P, T, L and H. In this organism, the P 'protein' is a heterodimer of two subunits. The cofactor is pyridoxal 5'-phosphate.

It catalyses the reaction N(6)-[(R)-lipoyl]-L-lysyl-[glycine-cleavage complex H protein] + glycine + H(+) = N(6)-[(R)-S(8)-aminomethyldihydrolipoyl]-L-lysyl-[glycine-cleavage complex H protein] + CO2. The glycine cleavage system catalyzes the degradation of glycine. The P protein binds the alpha-amino group of glycine through its pyridoxal phosphate cofactor; CO(2) is released and the remaining methylamine moiety is then transferred to the lipoamide cofactor of the H protein. This chain is Probable glycine dehydrogenase (decarboxylating) subunit 2, found in Legionella pneumophila (strain Corby).